The sequence spans 578 residues: Proline--tRNA ligase (578 aa).

This sequence belongs to the class-II aminoacyl-tRNA synthetase family. ProS type 1 subfamily. Homodimer.

The protein resides in the cytoplasm. The enzyme catalyses tRNA(Pro) + L-proline + ATP = L-prolyl-tRNA(Pro) + AMP + diphosphate. Catalyzes the attachment of proline to tRNA(Pro) in a two-step reaction: proline is first activated by ATP to form Pro-AMP and then transferred to the acceptor end of tRNA(Pro). As ProRS can inadvertently accommodate and process non-cognate amino acids such as alanine and cysteine, to avoid such errors it has two additional distinct editing activities against alanine. One activity is designated as 'pretransfer' editing and involves the tRNA(Pro)-independent hydrolysis of activated Ala-AMP. The other activity is designated 'posttransfer' editing and involves deacylation of mischarged Ala-tRNA(Pro). The misacylated Cys-tRNA(Pro) is not edited by ProRS. The protein is Proline--tRNA ligase of Burkholderia vietnamiensis (strain G4 / LMG 22486) (Burkholderia cepacia (strain R1808)).